A 131-amino-acid polypeptide reads, in one-letter code: D-ribose pyranase (131 aa).

Residue His-20 is the Proton donor of the active site. Residues Asp-28, His-98, and 120-122 (YAN) contribute to the substrate site.

This sequence belongs to the RbsD / FucU family. RbsD subfamily. Homodecamer.

It localises to the cytoplasm. It carries out the reaction beta-D-ribopyranose = beta-D-ribofuranose. Its pathway is carbohydrate metabolism; D-ribose degradation; D-ribose 5-phosphate from beta-D-ribopyranose: step 1/2. Functionally, catalyzes the interconversion of beta-pyran and beta-furan forms of D-ribose. The protein is D-ribose pyranase of Bacillus cereus (strain G9842).